The following is a 98-amino-acid chain: MSITYMNMFMAFTISLLGLLLYRSHMMSSLLCLEGMMLSLFVMMTMIILNTHLTLASMIPIILLVFAACEAALGLSLLVMVSTTYGMDYVQNLNLLQC.

Helical transmembrane passes span M1–L21, S29–L49, and I61–V81.

This sequence belongs to the complex I subunit 4L family. Core subunit of respiratory chain NADH dehydrogenase (Complex I) which is composed of 45 different subunits.

Its subcellular location is the mitochondrion inner membrane. It carries out the reaction a ubiquinone + NADH + 5 H(+)(in) = a ubiquinol + NAD(+) + 4 H(+)(out). Its function is as follows. Core subunit of the mitochondrial membrane respiratory chain NADH dehydrogenase (Complex I) which catalyzes electron transfer from NADH through the respiratory chain, using ubiquinone as an electron acceptor. Part of the enzyme membrane arm which is embedded in the lipid bilayer and involved in proton translocation. The chain is NADH-ubiquinone oxidoreductase chain 4L (MT-ND4L) from Platyrrhinus dorsalis (Thomas's broad-nosed bat).